The following is a 158-amino-acid chain: Transcription elongation factor GreA (158 aa).

Residues 47–73 are a coiled coil; it reads AEYHAAREKQSFIEGRIQELQAKLARA.

It belongs to the GreA/GreB family.

In terms of biological role, necessary for efficient RNA polymerase transcription elongation past template-encoded arresting sites. The arresting sites in DNA have the property of trapping a certain fraction of elongating RNA polymerases that pass through, resulting in locked ternary complexes. Cleavage of the nascent transcript by cleavage factors such as GreA or GreB allows the resumption of elongation from the new 3'terminus. GreA releases sequences of 2 to 3 nucleotides. The chain is Transcription elongation factor GreA from Thermodesulfovibrio yellowstonii (strain ATCC 51303 / DSM 11347 / YP87).